Here is a 379-residue protein sequence, read N- to C-terminus: Chaperone protein DnaJ (379 aa).

The region spanning 7-72 is the J domain; the sequence is CYYETLEVDR…DKRAAYDRYG (66 aa). Residues 135–213 form a CR-type zinc finger; it reads GKTAQIEIPV…CSGAGRIERE (79 aa). The Zn(2+) site is built by C148, C151, C165, C168, C187, C190, C201, and C204. CXXCXGXG motif repeat units lie at residues 148–155, 165–172, 187–194, and 201–208; these read CESCSGTG, CSMCGGAG, CPGCQGRG, and CPACSGAG.

It belongs to the DnaJ family. As to quaternary structure, homodimer. Zn(2+) is required as a cofactor.

The protein localises to the cytoplasm. Functionally, participates actively in the response to hyperosmotic and heat shock by preventing the aggregation of stress-denatured proteins and by disaggregating proteins, also in an autonomous, DnaK-independent fashion. Unfolded proteins bind initially to DnaJ; upon interaction with the DnaJ-bound protein, DnaK hydrolyzes its bound ATP, resulting in the formation of a stable complex. GrpE releases ADP from DnaK; ATP binding to DnaK triggers the release of the substrate protein, thus completing the reaction cycle. Several rounds of ATP-dependent interactions between DnaJ, DnaK and GrpE are required for fully efficient folding. Also involved, together with DnaK and GrpE, in the DNA replication of plasmids through activation of initiation proteins. This Rhodopseudomonas palustris (strain BisB18) protein is Chaperone protein DnaJ.